We begin with the raw amino-acid sequence, 682 residues long: Potassium-transporting ATPase ATP-binding subunit (682 aa).

4 helical membrane passes run 34-54 (PVMF…IAMA), 62-82 (ALFS…ANFA), 219-239 (IALT…TATL), and 254-274 (VLVA…LSAI). Aspartate 307 acts as the 4-aspartylphosphate intermediate in catalysis. ATP contacts are provided by residues aspartate 344, glutamate 348, 377–384 (FTAQSRMS), and lysine 395. Mg(2+) is bound by residues aspartate 518 and aspartate 522. 3 consecutive transmembrane segments (helical) span residues 588 to 608 (FAII…LNIM), 616 to 636 (AILS…PLAL), and 656 to 676 (IYGL…DLLL).

It belongs to the cation transport ATPase (P-type) (TC 3.A.3) family. Type IA subfamily. The system is composed of three essential subunits: KdpA, KdpB and KdpC.

The protein localises to the cell inner membrane. The catalysed reaction is K(+)(out) + ATP + H2O = K(+)(in) + ADP + phosphate + H(+). Its function is as follows. Part of the high-affinity ATP-driven potassium transport (or Kdp) system, which catalyzes the hydrolysis of ATP coupled with the electrogenic transport of potassium into the cytoplasm. This subunit is responsible for energy coupling to the transport system and for the release of the potassium ions to the cytoplasm. In Escherichia coli O8 (strain IAI1), this protein is Potassium-transporting ATPase ATP-binding subunit.